We begin with the raw amino-acid sequence, 302 residues long: Heat stress transcription factor B-1 (302 aa).

The span at 1–15 shows a compositional bias: low complexity; it reads MAAAEAAAAVGKQQQ. Disordered stretches follow at residues 1–33 and 116–184; these read MAAAEAAAAVGKQQQKGGGGRGGGGGGPAPFLT and GIRR…RKDN. Over residues 16 to 28 the composition is skewed to gly residues; the sequence is KGGGGRGGGGGGP. Residues 123–133 show a composition bias toward polar residues; that stretch reads TTPQSSKSCGS. The span at 139 to 150 shows a compositional bias: pro residues; the sequence is FPPPLPPLPPEP. Low complexity predominate over residues 151–172; that stretch reads SATTSSGNDRSSSSASSPPRAD. Residues 170 to 202 adopt a coiled-coil conformation; sequence RADITSENEQLRKDNQTLTMELARARRHCEELL. Residues 180 to 209 form a hydrophobic repeat HR-A/B region; it reads LRKDNQTLTMELARARRHCEELLGFLSRFL. The Nuclear export signal signature appears at 211 to 218; the sequence is VRQLDLRL. The Nuclear localization signal motif lies at 263–267; the sequence is RKRAR.

The protein belongs to the HSF family. Class B subfamily. In terms of assembly, homotrimer. Post-translationally, exhibits temperature-dependent phosphorylation.

Its subcellular location is the cytoplasm. The protein resides in the nucleus. Its function is as follows. Transcriptional regulator that specifically binds DNA of heat shock promoter elements (HSE). This Oryza sativa subsp. japonica (Rice) protein is Heat stress transcription factor B-1 (HSFB1).